The primary structure comprises 563 residues: Methylcrotonoyl-CoA carboxylase beta chain, mitochondrial (563 aa).

A mitochondrion-targeting transit peptide spans 1-22 (MWGALRSVLRPCSRASVPRQRA). The 258-residue stretch at 49–306 (MKALVNQLHE…QKKLDVTVEP (258 aa)) folds into the CoA carboxyltransferase N-terminal domain. The interval 49 to 555 (MKALVNQLHE…SAALNAPIQR (507 aa)) is carboxyltransferase. Lysine 70 bears the N6-acetyllysine; alternate mark. Residue lysine 70 is modified to N6-succinyllysine; alternate. The residue at position 141 (lysine 141) is an N6-succinyllysine. Positions 309–555 (EPLFPADELY…SAALNAPIQR (247 aa)) constitute a CoA carboxyltransferase C-terminal domain. Residues 343 to 372 (RFNEFKALYGDTLVTGFARIFGYPVGIIGN) are acyl-CoA binding. Position 433 is an N6-succinyllysine (lysine 433). Lysine 495 carries the post-translational modification N6-acetyllysine; alternate. At lysine 495 the chain carries N6-succinyllysine; alternate. Residue lysine 511 is modified to N6-acetyllysine.

The protein belongs to the AccD/PCCB family. As to quaternary structure, probably a dodecamer composed of six biotin-containing alpha subunits (MCCC1) and six beta (MCCC2) subunits.

The protein resides in the mitochondrion matrix. It catalyses the reaction 3-methylbut-2-enoyl-CoA + hydrogencarbonate + ATP = 3-methyl-(2E)-glutaconyl-CoA + ADP + phosphate + H(+). It participates in amino-acid degradation; L-leucine degradation; (S)-3-hydroxy-3-methylglutaryl-CoA from 3-isovaleryl-CoA: step 2/3. Its function is as follows. Carboxyltransferase subunit of the 3-methylcrotonyl-CoA carboxylase, an enzyme that catalyzes the conversion of 3-methylcrotonyl-CoA to 3-methylglutaconyl-CoA, a critical step for leucine and isovaleric acid catabolism. The protein is Methylcrotonoyl-CoA carboxylase beta chain, mitochondrial (Mccc2) of Rattus norvegicus (Rat).